We begin with the raw amino-acid sequence, 431 residues long: Gamma-glutamyl phosphate reductase (431 aa).

The protein belongs to the gamma-glutamyl phosphate reductase family.

It is found in the cytoplasm. The catalysed reaction is L-glutamate 5-semialdehyde + phosphate + NADP(+) = L-glutamyl 5-phosphate + NADPH + H(+). It functions in the pathway amino-acid biosynthesis; L-proline biosynthesis; L-glutamate 5-semialdehyde from L-glutamate: step 2/2. Functionally, catalyzes the NADPH-dependent reduction of L-glutamate 5-phosphate into L-glutamate 5-semialdehyde and phosphate. The product spontaneously undergoes cyclization to form 1-pyrroline-5-carboxylate. This Synechococcus elongatus (strain ATCC 33912 / PCC 7942 / FACHB-805) (Anacystis nidulans R2) protein is Gamma-glutamyl phosphate reductase.